The chain runs to 142 residues: Ribosomal RNA large subunit methyltransferase H (142 aa).

Residues Leu-55 and Gly-87 each coordinate S-adenosyl-L-methionine.

It belongs to the RNA methyltransferase RlmH family. Homodimer.

The protein localises to the cytoplasm. It carries out the reaction pseudouridine(1915) in 23S rRNA + S-adenosyl-L-methionine = N(3)-methylpseudouridine(1915) in 23S rRNA + S-adenosyl-L-homocysteine + H(+). Its function is as follows. Specifically methylates the pseudouridine at position 1915 (m3Psi1915) in 23S rRNA. The polypeptide is Ribosomal RNA large subunit methyltransferase H (Sphingopyxis alaskensis (strain DSM 13593 / LMG 18877 / RB2256) (Sphingomonas alaskensis)).